We begin with the raw amino-acid sequence, 24 residues long: M-poneritoxin-Ng2b (24 aa).

Position 24 is a leucine amide (Leu24).

Expressed by the venom gland.

The protein localises to the secreted. In terms of biological role, has a broad spectrum of activity against both Gram-positive and Gram-negative bacteria. Is inactive against yeast, erythrocytes, and insects. In Neoponera goeldii (Ponerine ant), this protein is M-poneritoxin-Ng2b.